A 579-amino-acid polypeptide reads, in one-letter code: L-ascorbate oxidase (579 aa).

An N-terminal signal peptide occupies residues 1 to 30 (MLQMGKAREPNFLILFFFGLILAFGISSEG). Plastocyanin-like domains are found at residues 33-152 (IRHY…LIVD) and 164-330 (DGEI…NYLP). Intrachain disulfides connect Cys-49/Cys-231, Cys-111/Cys-568, and Cys-210/Cys-223. The Cu cation site is built by His-90 and His-92. A glycan (N-linked (GlcNAc...) asparagine) is linked at Asn-122. The Cu cation site is built by His-134 and His-136. Residues Asn-355 and Asn-470 are each glycosylated (N-linked (GlcNAc...) asparagine). Residues 374 to 553 (NRRIFLLNTQ…HMGMGVVFAE (180 aa)) enclose the Plastocyanin-like 3 domain. 8 residues coordinate Cu cation: His-475, His-478, His-480, His-536, Cys-537, His-538, His-542, and Met-547.

This sequence belongs to the multicopper oxidase family. In terms of assembly, dimer. Requires Cu cation as cofactor.

It is found in the secreted. The catalysed reaction is 4 L-ascorbate + O2 = 4 monodehydro-L-ascorbate radical + 2 H2O. In terms of biological role, may be involved in a redox system involving ascorbic acid. In Cucurbita maxima (Pumpkin), this protein is L-ascorbate oxidase (AAO).